The sequence spans 438 residues: Ribosomal protein uS12 methylthiotransferase RimO (438 aa).

The region spanning 5 to 115 (PRVGFVSLGC…VMSAVHTHLP (111 aa)) is the MTTase N-terminal domain. [4Fe-4S] cluster contacts are provided by C14, C50, C79, C146, C150, and C153. The Radical SAM core domain maps to 132–369 (LTPKHYAYLK…MAVQAEISAR (238 aa)). In terms of domain architecture, TRAM spans 372-438 (ERRVGQTLQV…SEHDLWGERR (67 aa)).

This sequence belongs to the methylthiotransferase family. RimO subfamily. [4Fe-4S] cluster is required as a cofactor.

It is found in the cytoplasm. The catalysed reaction is L-aspartate(89)-[ribosomal protein uS12]-hydrogen + (sulfur carrier)-SH + AH2 + 2 S-adenosyl-L-methionine = 3-methylsulfanyl-L-aspartate(89)-[ribosomal protein uS12]-hydrogen + (sulfur carrier)-H + 5'-deoxyadenosine + L-methionine + A + S-adenosyl-L-homocysteine + 2 H(+). Catalyzes the methylthiolation of an aspartic acid residue of ribosomal protein uS12. The chain is Ribosomal protein uS12 methylthiotransferase RimO from Chromobacterium violaceum (strain ATCC 12472 / DSM 30191 / JCM 1249 / CCUG 213 / NBRC 12614 / NCIMB 9131 / NCTC 9757 / MK).